A 587-amino-acid chain; its full sequence is General negative regulator of transcription subunit 4 (587 aa).

The RING-type zinc finger occupies 33 to 78; that stretch reads CPLCIEPMDITDKNFFPCPCGYQICQFCYNNIRQNPELNGRCPACR. Residues 94–128 are a coiled coil; sequence EELKMERAKLARKEKERKHREKERKENEYTNRKHL. The 92-residue stretch at 137 to 228 folds into the RRM domain; the sequence is NLVYVVGINP…YMDGRLIKAA (92 aa). The segment at 229–256 adopts a C3H1-type zinc-finger fold; sequence YGTTKYCSSYLRGLPCPNPNCMFLHEPG. Lys-270 is covalently cross-linked (Glycyl lysine isopeptide (Lys-Gly) (interchain with G-Cter in ubiquitin)). Thr-310 is modified (phosphothreonine). At Ser-312 the chain carries Phosphoserine. Thr-326 carries the post-translational modification Phosphothreonine. Ser-360 is modified (phosphoserine). A disordered region spans residues 370–412; it reads TLNDSLGHHTTPTTENTITSTTTTTNTNATSHSHGSKKKQSLA. Over residues 377–402 the composition is skewed to low complexity; the sequence is HHTTPTTENTITSTTTTTNTNATSHS.

As to quaternary structure, forms a NOT protein complex that comprises NOT1, NOT2, NOT3, NOT4 and NOT5. Subunit of the 1.0 MDa CCR4-NOT core complex that contains CCR4, CAF1, NOT1, NOT2, NOT3, NOT4, NOT5, CAF40 and CAF130. In the complex interacts with NOT1. The core complex probably is part of a less characterized 1.9 MDa CCR4-NOT complex.

It localises to the cytoplasm. The protein localises to the nucleus. The enzyme catalyses S-ubiquitinyl-[E2 ubiquitin-conjugating enzyme]-L-cysteine + [acceptor protein]-L-lysine = [E2 ubiquitin-conjugating enzyme]-L-cysteine + N(6)-ubiquitinyl-[acceptor protein]-L-lysine.. It functions in the pathway protein modification; protein ubiquitination. E3 ubiquitin-protein ligase component of the CCR4-NOT core complex, which in the nucleus seems to be a general transcription factor, and in the cytoplasm the major mRNA deadenylase involved in mRNA turnover. The NOT protein subcomplex negatively regulates the basal and activated transcription of many genes. Preferentially affects TC-type TATA element-dependent transcription. Could directly or indirectly inhibit component(s) of the general transcription machinery. In the cytoplasm, catalyzes monoubiquitination of RPS7/es7 in response to stalled ribosomes, initiating a HEL2-dependent response that activates the No-Go Decay (NGD) pathway. The chain is General negative regulator of transcription subunit 4 (MOT2) from Saccharomyces cerevisiae (strain ATCC 204508 / S288c) (Baker's yeast).